A 162-amino-acid chain; its full sequence is NADH-quinone oxidoreductase subunit I (162 aa).

2 4Fe-4S ferredoxin-type domains span residues 53-83 (LRRYPNGEERCIACKLCEAVCPALAITIDSE) and 93-122 (TRYDIDLTKCIFCGFCEESCPVDSIVETRI). The [4Fe-4S] cluster site is built by C63, C66, C69, C73, C102, C105, C108, and C112.

This sequence belongs to the complex I 23 kDa subunit family. NDH-1 is composed of 14 different subunits. Subunits NuoA, H, J, K, L, M, N constitute the membrane sector of the complex. The cofactor is [4Fe-4S] cluster.

It is found in the cell inner membrane. The catalysed reaction is a quinone + NADH + 5 H(+)(in) = a quinol + NAD(+) + 4 H(+)(out). NDH-1 shuttles electrons from NADH, via FMN and iron-sulfur (Fe-S) centers, to quinones in the respiratory chain. The immediate electron acceptor for the enzyme in this species is believed to be ubiquinone. Couples the redox reaction to proton translocation (for every two electrons transferred, four hydrogen ions are translocated across the cytoplasmic membrane), and thus conserves the redox energy in a proton gradient. In Thiobacillus denitrificans (strain ATCC 25259 / T1), this protein is NADH-quinone oxidoreductase subunit I.